The chain runs to 134 residues: Retinol-binding protein 2 (134 aa).

Lysine 41 and glutamine 109 together coordinate all-trans-retinol.

It belongs to the calycin superfamily. Fatty-acid binding protein (FABP) family. As to expression, expressed in prenatal liver, intestine and lung, and in adult intestine.

It localises to the cytoplasm. In terms of biological role, intracellular transport of retinol. This Mus musculus (Mouse) protein is Retinol-binding protein 2 (Rbp2).